Reading from the N-terminus, the 342-residue chain is Phomopsin biosynthesis cluster protein B (342 aa).

Residues Met-1–Pro-22 are disordered. A helical membrane pass occupies residues Val-87–Ala-107. Residues Cys-118–Gln-186 are disordered. The segment covering His-144–Asn-155 has biased composition (low complexity). An N-linked (GlcNAc...) asparagine glycan is attached at Asn-248.

It localises to the membrane. Part of the gene cluster that mediates the biosynthesis of the phomopsins, a group of hexapeptide mycotoxins which infects lupins and causes lupinosis disease in livestock. The role of phomB within the phomopsins biosynthesis pathway has still to be determined. The pathway starts with the processing of the precursor phomA by several endopeptidases including kexin proteases as well as the cluster-specific S41 family peptidase phomP1 and the oligopeptidase phomG to produce 10 identical copies of the hexapeptide Tyr-Val-Ile-Pro-Ile-Asp. After being excised from the precursor peptide, the core peptides are cyclized and modified post-translationally by enzymes encoded within the gene cluster. The timing and order of proteolysis of the phomA precursor and PTMs are still unknown. Two tyrosinase-like enzymes, phomQ1 and phomQ2, catalyze the chlorination and hydroxylation of Tyr, respectively. PhomYb, is proposed to be involved in the construction of the macrocyclic structure. The other 4 ustYa family proteins may be involved in PTMs that generate the unique structure of phomopsin A. PhomYa is required for the hydroxylation of C-beta of Tyr. PhomYc, phomYd, and phomYe are responsible for the biosynthesis of 2,3-dehydroisoleucine (dIle), 2,3-dehydroaspartic acid (dAsp), and 3,4-dehydroproline (dPro), respectively. While dIle formation by phomYc is indispensable for the installation of dAsp by phomYd, the order of the other PTMs have not been elucidated yet. Most of the biosynthetic enzymes likely have broad substrate specificity, and thus, there might be a metabolic grid from a precursor to phomopsin A. The enzyme(s) responsible for the biosynthesis of 3,4-dehydrovaline (dVal) have also not been identified yet. Finally, phomM acts as an S-adenosylmethionine-dependent alpha-N-methyltransferase that catalyzes two successive N-methylation reactions, converting N-desmethyl-phomopsin A to phomopsin A and phomopsin A further to an N,N-dimethylated congener called phomopsin E. This is Phomopsin biosynthesis cluster protein B from Diaporthe leptostromiformis (Lupinosis disease fungus).